The sequence spans 518 residues: Putative succinate-semialdehyde dehydrogenase [NADP(+)] 2 (518 aa).

NADP(+)-binding positions include 157 to 158, 181 to 184, and 232 to 233; these read WN, KPDS, and GS. Glutamate 254 serves as the catalytic Proton acceptor. Leucine 255 serves as a coordination point for NADP(+). Cysteine 288 serves as the catalytic Nucleophile. Glutamate 386 serves as a coordination point for NADP(+).

This sequence belongs to the aldehyde dehydrogenase family.

The enzyme catalyses succinate semialdehyde + NADP(+) + H2O = succinate + NADPH + 2 H(+). In terms of biological role, catalyzes the NADP(+)-dependent oxidation of succinate semialdehyde to succinate. Although it has succinate semialdehyde dehydrogenase activity, is likely to act physiologically on a different aldehyde(s). In Mycobacterium ulcerans (strain Agy99), this protein is Putative succinate-semialdehyde dehydrogenase [NADP(+)] 2 (gabD2).